The following is a 750-amino-acid chain: Photosystem I P700 chlorophyll a apoprotein A1 (750 aa).

Transmembrane regions (helical) follow at residues 70 to 93 (VFSA…FHGA), 156 to 179 (LYCT…FHYH), 195 to 219 (LNHH…HVSL), 291 to 309 (IAHH…GHMY), 346 to 369 (WHAQ…HHMY), 385 to 411 (LSLF…IFMV), 433 to 455 (AIIS…LYIH), and 531 to 549 (FLVH…LILL). [4Fe-4S] cluster contacts are provided by Cys573 and Cys582. 2 helical membrane-spanning segments follow: residues 589–610 (HVFL…HFSW) and 664–686 (LSAY…MFLF). His675 lines the chlorophyll a' pocket. 2 residues coordinate chlorophyll a: Met683 and Tyr691. Trp692 provides a ligand contact to phylloquinone. The helical transmembrane segment at 724-744 (AVGVTHYLLGGIATTWAFFLA) threads the bilayer.

It belongs to the PsaA/PsaB family. In terms of assembly, the PsaA/B heterodimer binds the P700 chlorophyll special pair and subsequent electron acceptors. PSI consists of a core antenna complex that captures photons, and an electron transfer chain that converts photonic excitation into a charge separation. The eukaryotic PSI reaction center is composed of at least 11 subunits. Requires P700 is a chlorophyll a/chlorophyll a' dimer, A0 is one or more chlorophyll a, A1 is one or both phylloquinones and FX is a shared 4Fe-4S iron-sulfur center. as cofactor.

The protein localises to the plastid. The protein resides in the chloroplast thylakoid membrane. It carries out the reaction reduced [plastocyanin] + hnu + oxidized [2Fe-2S]-[ferredoxin] = oxidized [plastocyanin] + reduced [2Fe-2S]-[ferredoxin]. Functionally, psaA and PsaB bind P700, the primary electron donor of photosystem I (PSI), as well as the electron acceptors A0, A1 and FX. PSI is a plastocyanin-ferredoxin oxidoreductase, converting photonic excitation into a charge separation, which transfers an electron from the donor P700 chlorophyll pair to the spectroscopically characterized acceptors A0, A1, FX, FA and FB in turn. Oxidized P700 is reduced on the lumenal side of the thylakoid membrane by plastocyanin. This Draba nemorosa (Woodland whitlowgrass) protein is Photosystem I P700 chlorophyll a apoprotein A1.